The chain runs to 322 residues: Cytochrome c biogenesis protein CcsA (322 aa).

A run of 8 helical transmembrane segments spans residues 9–29 (ILTH…LITL), 44–64 (GMIT…IFLG), 71–91 (LYES…VPYF), 97–117 (FLSA…TSGL), 143–163 (MILG…FLVI), 225–245 (IISI…VWAN), 254–274 (WDPK…YFHI), and 286–306 (AIVA…VNLL).

The protein belongs to the CcmF/CycK/Ccl1/NrfE/CcsA family. May interact with Ccs1.

The protein localises to the plastid. It localises to the chloroplast thylakoid membrane. Required during biogenesis of c-type cytochromes (cytochrome c6 and cytochrome f) at the step of heme attachment. This Manihot esculenta (Cassava) protein is Cytochrome c biogenesis protein CcsA.